Reading from the N-terminus, the 442-residue chain is UDP-N-acetylmuramate--L-alanine ligase (442 aa).

An ATP-binding site is contributed by 109 to 115 (GAHGKTS).

It belongs to the MurCDEF family.

It localises to the cytoplasm. The enzyme catalyses UDP-N-acetyl-alpha-D-muramate + L-alanine + ATP = UDP-N-acetyl-alpha-D-muramoyl-L-alanine + ADP + phosphate + H(+). Its pathway is cell wall biogenesis; peptidoglycan biosynthesis. In terms of biological role, cell wall formation. This is UDP-N-acetylmuramate--L-alanine ligase from Streptococcus pyogenes serotype M6 (strain ATCC BAA-946 / MGAS10394).